Here is a 242-residue protein sequence, read N- to C-terminus: Ferritin, mitochondrial (242 aa).

Residues 1–49 constitute a mitochondrion transit peptide; the sequence is MLPCSLFLPKHISTSLVFLRSARHGFALLPRWVPRLSSDYPPAAPIRLL. In terms of domain architecture, Ferritin-like diiron spans 70–219; that stretch reads QNFHPDSEAA…DHVNNLVKMG (150 aa). Fe cation-binding residues include glutamate 87, glutamate 122, histidine 125, glutamate 167, and glutamine 201.

Belongs to the ferritin family. As to quaternary structure, homooligomer of 24 subunits. The functional molecule is roughly spherical and contains a central cavity into which the polymeric mineral iron core is deposited.

The protein localises to the mitochondrion. The catalysed reaction is 4 Fe(2+) + O2 + 4 H(+) = 4 Fe(3+) + 2 H2O. Its function is as follows. Catalyzes the oxidation of ferrous iron(II) to ferric iron(III) and stores iron in a soluble, non-toxic, readily available form. Important for iron homeostasis. Iron is taken up in the ferrous form and deposited as ferric hydroxides after oxidation. This is Ferritin, mitochondrial from Bos taurus (Bovine).